The sequence spans 329 residues: ATP phosphoribosyltransferase regulatory subunit (329 aa).

The protein belongs to the class-II aminoacyl-tRNA synthetase family. HisZ subfamily. Heteromultimer composed of HisG and HisZ subunits.

It is found in the cytoplasm. Its pathway is amino-acid biosynthesis; L-histidine biosynthesis; L-histidine from 5-phospho-alpha-D-ribose 1-diphosphate: step 1/9. Functionally, required for the first step of histidine biosynthesis. May allow the feedback regulation of ATP phosphoribosyltransferase activity by histidine. This chain is ATP phosphoribosyltransferase regulatory subunit, found in Streptococcus gordonii (strain Challis / ATCC 35105 / BCRC 15272 / CH1 / DL1 / V288).